The following is a 148-amino-acid chain: Deoxyuridine 5'-triphosphate nucleotidohydrolase (148 aa).

Substrate-binding positions include 67–69 (RSG), N80, 84–86 (LID), and M94.

Belongs to the dUTPase family. Mg(2+) serves as cofactor.

The enzyme catalyses dUTP + H2O = dUMP + diphosphate + H(+). The protein operates within pyrimidine metabolism; dUMP biosynthesis; dUMP from dCTP (dUTP route): step 2/2. In terms of biological role, this enzyme is involved in nucleotide metabolism: it produces dUMP, the immediate precursor of thymidine nucleotides and it decreases the intracellular concentration of dUTP so that uracil cannot be incorporated into DNA. The protein is Deoxyuridine 5'-triphosphate nucleotidohydrolase of Burkholderia multivorans (strain ATCC 17616 / 249).